A 95-amino-acid polypeptide reads, in one-letter code: Small ribosomal subunit protein bS6 (95 aa).

Belongs to the bacterial ribosomal protein bS6 family.

Binds together with bS18 to 16S ribosomal RNA. The protein is Small ribosomal subunit protein bS6 of Rhodococcus jostii (strain RHA1).